A 942-amino-acid polypeptide reads, in one-letter code: Eukaryotic translation initiation factor 3 subunit A (942 aa).

A PCI domain is found at 320 to 494 (FKKYSSIILL…NTVTFFKDPF (175 aa)). Coiled-coil stretches lie at residues 499-529 (KAAG…GEEI), 588-669 (ITQT…KQRE), 705-734 (SKLS…AYRK), and 821-912 (IEEV…RKAQ). The segment at 502–546 (GTVEEEEEEEEEEGEEVEGEEAETGEEIVEEGEEHENEENKEPEP) is disordered. A compositionally biased stretch (acidic residues) spans 504-538 (VEEEEEEEEEEGEEVEGEEAETGEEIVEEGEEHEN). Basic and acidic residues-rich tracts occupy residues 836–870 (RKAE…ERKS) and 889–911 (RSAK…ERKA). The tract at residues 836–942 (RKAEIEAEER…KMKLRRASKK (107 aa)) is disordered.

Belongs to the eIF-3 subunit A family. As to quaternary structure, component of the eukaryotic translation initiation factor 3 (eIF-3) complex.

Its subcellular location is the cytoplasm. Its function is as follows. RNA-binding component of the eukaryotic translation initiation factor 3 (eIF-3) complex, which is involved in protein synthesis of a specialized repertoire of mRNAs and, together with other initiation factors, stimulates binding of mRNA and methionyl-tRNAi to the 40S ribosome. The eIF-3 complex specifically targets and initiates translation of a subset of mRNAs involved in cell proliferation. The sequence is that of Eukaryotic translation initiation factor 3 subunit A from Vanderwaltozyma polyspora (strain ATCC 22028 / DSM 70294 / BCRC 21397 / CBS 2163 / NBRC 10782 / NRRL Y-8283 / UCD 57-17) (Kluyveromyces polysporus).